Here is a 185-residue protein sequence, read N- to C-terminus: Ribosome-recycling factor (185 aa).

The protein belongs to the RRF family.

Its subcellular location is the cytoplasm. In terms of biological role, responsible for the release of ribosomes from messenger RNA at the termination of protein biosynthesis. May increase the efficiency of translation by recycling ribosomes from one round of translation to another. In Pectobacterium carotovorum subsp. carotovorum (strain PC1), this protein is Ribosome-recycling factor.